Consider the following 666-residue polypeptide: Fructose-1,6-bisphosphatase class 3 (666 aa).

This sequence belongs to the FBPase class 3 family. The cofactor is Mn(2+).

The enzyme catalyses beta-D-fructose 1,6-bisphosphate + H2O = beta-D-fructose 6-phosphate + phosphate. Its pathway is carbohydrate biosynthesis; gluconeogenesis. This is Fructose-1,6-bisphosphatase class 3 from Phocaeicola vulgatus (strain ATCC 8482 / DSM 1447 / JCM 5826 / CCUG 4940 / NBRC 14291 / NCTC 11154) (Bacteroides vulgatus).